The sequence spans 130 residues: Small ribosomal subunit protein uS8 (130 aa).

This sequence belongs to the universal ribosomal protein uS8 family. As to quaternary structure, part of the 30S ribosomal subunit. Contacts proteins S5 and S12.

Its function is as follows. One of the primary rRNA binding proteins, it binds directly to 16S rRNA central domain where it helps coordinate assembly of the platform of the 30S subunit. This is Small ribosomal subunit protein uS8 from Shewanella sediminis (strain HAW-EB3).